A 79-amino-acid chain; its full sequence is Conotoxin VnMEKL-024 (79 aa).

The N-terminal stretch at 1–19 (MQKLTILLLVAAVLMSTQA) is a signal peptide. A propeptide spanning residues 20 to 50 (LIRGGVEKRQEAKRNFFSKRKTTAESWWEGE) is cleaved from the precursor. Cystine bridges form between cysteine 51–cysteine 65, cysteine 58–cysteine 69, and cysteine 64–cysteine 76.

Belongs to the conotoxin O2 superfamily. In terms of tissue distribution, expressed by the venom duct.

Its subcellular location is the secreted. The chain is Conotoxin VnMEKL-024 from Conus ventricosus (Mediterranean cone).